A 381-amino-acid chain; its full sequence is MAEQPIRYEFIKECKQTGARLGKVHTPHGSFETPVFMPVGTLATVKTMSPEELKAMDAGIILSNTYHLWLRPGQDIVKEAGGLHKFMNWDRAILTDSGGFQVFSLSKFRNIEEEGVHFRNHLNGDKLFLSPEKAMEIQNALGSDIMMAFDECPPYPAEYDYMKRSVERTSRWAERCLNAHNRQDEQGLFGIVQGGEYEDLRTQSAKDLISLDFPGYAIGGLSVGEPKDVMNRVLEFTTPLLPKDKPRYLMGVGSPDALIDGAIRGVDMFDCVLPTRIARNGTVFTAEGRLNMKNAKFERDFRPIDEECDCYTCKNYTRAYIRHLIRCNETFGLRLTTYHNLHFLLHLMEQVRQAIREDRLGDFREEFFERYGYNKPNAKSF.

The Proton acceptor role is filled by Asp96. Substrate is bound by residues 96–100 (DSGGF), Asp150, Gln193, and Gly220. The segment at 251–257 (GVGSPDA) is RNA binding. Asp270 acts as the Nucleophile in catalysis. The interval 275–279 (TRIAR) is RNA binding; important for wobble base 34 recognition. Cys308, Cys310, Cys313, and His339 together coordinate Zn(2+).

The protein belongs to the queuine tRNA-ribosyltransferase family. Homodimer. Within each dimer, one monomer is responsible for RNA recognition and catalysis, while the other monomer binds to the replacement base PreQ1. It depends on Zn(2+) as a cofactor.

It carries out the reaction 7-aminomethyl-7-carbaguanine + guanosine(34) in tRNA = 7-aminomethyl-7-carbaguanosine(34) in tRNA + guanine. The protein operates within tRNA modification; tRNA-queuosine biosynthesis. In terms of biological role, catalyzes the base-exchange of a guanine (G) residue with the queuine precursor 7-aminomethyl-7-deazaguanine (PreQ1) at position 34 (anticodon wobble position) in tRNAs with GU(N) anticodons (tRNA-Asp, -Asn, -His and -Tyr). Catalysis occurs through a double-displacement mechanism. The nucleophile active site attacks the C1' of nucleotide 34 to detach the guanine base from the RNA, forming a covalent enzyme-RNA intermediate. The proton acceptor active site deprotonates the incoming PreQ1, allowing a nucleophilic attack on the C1' of the ribose to form the product. After dissociation, two additional enzymatic reactions on the tRNA convert PreQ1 to queuine (Q), resulting in the hypermodified nucleoside queuosine (7-(((4,5-cis-dihydroxy-2-cyclopenten-1-yl)amino)methyl)-7-deazaguanosine). The polypeptide is Queuine tRNA-ribosyltransferase (Bacillus subtilis (strain 168)).